Consider the following 136-residue polypeptide: Large ribosomal subunit protein eL27 (136 aa).

This sequence belongs to the eukaryotic ribosomal protein eL27 family.

This is Large ribosomal subunit protein eL27 (RPL27) from Candida albicans (Yeast).